Consider the following 307-residue polypeptide: Undecaprenyl-diphosphatase (307 aa).

6 helical membrane passes run 40–60, 79–99, 107–127, 183–203, 219–239, and 249–269; these read AAKT…VVYF, LRLA…GLLF, LFGP…MIGV, AAAA…ATVF, IVAL…VIAV, and LAPF…LWIA.

The protein belongs to the UppP family.

It localises to the cell inner membrane. The catalysed reaction is di-trans,octa-cis-undecaprenyl diphosphate + H2O = di-trans,octa-cis-undecaprenyl phosphate + phosphate + H(+). Functionally, catalyzes the dephosphorylation of undecaprenyl diphosphate (UPP). Confers resistance to bacitracin. This Sorangium cellulosum (strain So ce56) (Polyangium cellulosum (strain So ce56)) protein is Undecaprenyl-diphosphatase.